We begin with the raw amino-acid sequence, 563 residues long: Efflux pump notK (563 aa).

The tract at residues 1-32 (MTKDEDSGTTDGGYSTPDIAVQEKQDQPPAPE) is disordered. 14 helical membrane-spanning segments follow: residues 48-68 (IFLS…AIPG), 78-98 (DVGW…PMWG), 108-128 (LVYL…AAAP), 138-158 (ALQG…ISYV), 165-185 (AMLI…GPLL), 197-217 (WCFW…VLFF), 239-259 (LPGF…LQWG), 270-290 (VIAT…VEWI), 312-332 (LYGW…PIYF), 345-365 (VNSL…GFLI), 374-394 (YEFA…TLDI), 406-426 (VIFG…LESF), 438-458 (VMLM…QSIF), and 509-529 (VFAF…AIPF). The interval 538-563 (GPSNGQEEEEGKKDGPAEKKEDEVAV) is disordered. Positions 547–563 (EGKKDGPAEKKEDEVAV) are enriched in basic and acidic residues.

It belongs to the major facilitator superfamily. TCR/Tet family.

It is found in the cell membrane. Efflux pump; part of the gene cluster that mediates the biosynthesis of notoamide, a fungal indole alkaloid that belongs to a family of natural products containing a characteristic bicyclo[2.2.2]diazaoctane core. The chain is Efflux pump notK from Aspergillus sp. (strain MF297-2).